A 522-amino-acid polypeptide reads, in one-letter code: FAD-dependent monooxygenase fsr3 (522 aa).

Positions 1-27 are disordered; it reads MKNTQTNGTHPIIDKKPNGTLNGDHQE. Residue Arg164 participates in FAD binding. Arg245 is a catalytic residue. FAD-binding residues include Asp369 and Ala382.

It belongs to the paxM FAD-dependent monooxygenase family. FAD serves as cofactor.

Its pathway is polyketide biosynthesis. In terms of biological role, FAD-dependent monooxygenase; part of the gene cluster that mediates the biosynthesis of fusarubins, highly pigmented naphthoquinones responsible for the coloration of the fruiting bodies. The non-reducing polyketide synthase FSR1 is responsible for the condensation of seven acetyl-CoA units to yield a haptaketide. After rings A and B are formed by aldol-type cyclization, the PKS-derived product is released as 6-O-demethylfusarubinaldehyde. Then, two hydroxyl groups at C-5 and C-10 are incorporated by FSR3, and simultaneously hydroxyl groups at C-6 and C-8 are methylated by FSR2. The aldehyde is, on the one hand, reduced by FSR3 to 8-O-methylfusarubin alcohol, which equilibrates mainly with 8-O-methylfusarubin and only small amounts of 8-O-methylnectriafurone. On the other hand, the aldehyde can be oxidized to form 8-O-methylfusarubinic acid, a reaction driven by FSR3 equilibrating with 8-O-methylfusarubinlactone, finally resulting in 8-O-methylanhydrofusarubinlactol after a further reduction step and loss of water. 8-O-Methylfusarubinic acid can also undergo decarboxylation, resulting in 8-O-methyl-13-hydroxynorjavanicin after another hydroxylation step at C-13. Both steps are most likely also accomplished by FSR3. No enzymatic function has been determined so far for either FSR4 and FSR5. Their deletion does not alter the product spectrum, but the possibility that they catalyze specific enzymatic steps during perithecium development cannot be ruled out. FSR4 might possess a regulatory function in the biosynthesis of fusarubins. The polypeptide is FAD-dependent monooxygenase fsr3 (Gibberella fujikuroi (strain CBS 195.34 / IMI 58289 / NRRL A-6831) (Bakanae and foot rot disease fungus)).